Reading from the N-terminus, the 457-residue chain is uncharacterized protein (457 aa).

In terms of domain architecture, TRAM spans P5–T63. S-adenosyl-L-methionine contacts are provided by Q287, Y316, E337, and D385. C412 acts as the Nucleophile in catalysis.

This sequence belongs to the class I-like SAM-binding methyltransferase superfamily. RNA M5U methyltransferase family.

This is an uncharacterized protein from Enterococcus faecalis (strain ATCC 700802 / V583).